Reading from the N-terminus, the 511-residue chain is Tyrosine--tRNA ligase, chloroplastic/mitochondrial (511 aa).

Tyr118 is an L-tyrosine binding site. Asp122 lines the ATP pocket. The short motif at 123–132 (PTAESLHLGN) is the 'HIGH' region element. L-tyrosine contacts are provided by Asp162, Tyr256, Gln260, Asp263, and Gln282. The 'KMSKS' region motif lies at 318 to 322 (KFGKS). Lys321 lines the ATP pocket. Residues 444–510 (LSIVDLSVSA…GKKNKVVVRI (67 aa)) form the S4 RNA-binding domain.

It belongs to the class-I aminoacyl-tRNA synthetase family.

It is found in the plastid. The protein resides in the chloroplast. Its subcellular location is the mitochondrion. It catalyses the reaction tRNA(Tyr) + L-tyrosine + ATP = L-tyrosyl-tRNA(Tyr) + AMP + diphosphate + H(+). Its function is as follows. Catalyzes the attachment of tyrosine to tRNA(Tyr) in a two-step reaction: tyrosine is first activated by ATP to form Tyr-AMP and then transferred to the acceptor end of tRNA(Tyr). This is Tyrosine--tRNA ligase, chloroplastic/mitochondrial from Arabidopsis thaliana (Mouse-ear cress).